A 241-amino-acid polypeptide reads, in one-letter code: ATP synthase subunit a (241 aa).

A run of 5 helical transmembrane segments spans residues 23-43 (VSFTNSSLLMLLTVGLAAAFF), 83-103 (YFPYILTLFVFVFLGNMLGML), 113-133 (IAVTAALAVGIFIAVTIIGFA), 188-208 (VLAGFVIMLGVVGGVVPFAVV), and 209-229 (LGVTVLEFFIAALQAYVFTIL).

This sequence belongs to the ATPase A chain family. F-type ATPases have 2 components, CF(1) - the catalytic core - and CF(0) - the membrane proton channel. CF(1) has five subunits: alpha(3), beta(3), gamma(1), delta(1), epsilon(1). CF(0) has four main subunits: a, b, b' and c.

The protein resides in the cell inner membrane. In terms of biological role, key component of the proton channel; it plays a direct role in the translocation of protons across the membrane. In Rhodospirillum rubrum (strain ATCC 11170 / ATH 1.1.1 / DSM 467 / LMG 4362 / NCIMB 8255 / S1), this protein is ATP synthase subunit a.